Here is a 386-residue protein sequence, read N- to C-terminus: Succinate--CoA ligase [ADP-forming] subunit beta (386 aa).

An ATP-grasp domain is found at 9–244; it reads KELFANYGVP…LDEEEPLEVE (236 aa). ATP-binding positions include lysine 46, 53–55, glutamate 99, leucine 102, and glutamate 107; that span reads GRG. Mg(2+) is bound by residues asparagine 199 and aspartate 213. Substrate-binding positions include asparagine 264 and 321-323; that span reads GIL.

This sequence belongs to the succinate/malate CoA ligase beta subunit family. Heterotetramer of two alpha and two beta subunits. Requires Mg(2+) as cofactor.

It catalyses the reaction succinate + ATP + CoA = succinyl-CoA + ADP + phosphate. The enzyme catalyses GTP + succinate + CoA = succinyl-CoA + GDP + phosphate. It functions in the pathway carbohydrate metabolism; tricarboxylic acid cycle; succinate from succinyl-CoA (ligase route): step 1/1. Succinyl-CoA synthetase functions in the citric acid cycle (TCA), coupling the hydrolysis of succinyl-CoA to the synthesis of either ATP or GTP and thus represents the only step of substrate-level phosphorylation in the TCA. The beta subunit provides nucleotide specificity of the enzyme and binds the substrate succinate, while the binding sites for coenzyme A and phosphate are found in the alpha subunit. The sequence is that of Succinate--CoA ligase [ADP-forming] subunit beta from Desulfatibacillum aliphaticivorans.